The primary structure comprises 508 residues: NADH-quinone oxidoreductase subunit N 2 (508 aa).

Helical transmembrane passes span 14–34 (SYVA…VIVL), 43–63 (SLVW…WYTA), 90–110 (FTFF…LLSA), 119–139 (GAHM…MFMV), 144–164 (LLTI…LAGI), 179–199 (FLTG…IYGV), 223–243 (GPAL…GFGF), 275–295 (GAAM…APFT), 298–318 (WALI…LVAL), 327–347 (MAYS…ASGL), 353–373 (ISSV…IFAV), 400–420 (AWAL…VGFL), 433–455 (GYLW…YYRV), and 473–493 (TGIS…TIFA).

Belongs to the complex I subunit 2 family. NDH-1 is composed of 14 different subunits. Subunits NuoA, H, J, K, L, M, N constitute the membrane sector of the complex.

Its subcellular location is the cell membrane. It carries out the reaction a quinone + NADH + 5 H(+)(in) = a quinol + NAD(+) + 4 H(+)(out). Functionally, NDH-1 shuttles electrons from NADH, via FMN and iron-sulfur (Fe-S) centers, to quinones in the respiratory chain. The immediate electron acceptor for the enzyme in this species is believed to be a menaquinone. Couples the redox reaction to proton translocation (for every two electrons transferred, four hydrogen ions are translocated across the cytoplasmic membrane), and thus conserves the redox energy in a proton gradient. The sequence is that of NADH-quinone oxidoreductase subunit N 2 from Symbiobacterium thermophilum (strain DSM 24528 / JCM 14929 / IAM 14863 / T).